Consider the following 139-residue polypeptide: Early placenta insulin-like peptide (139 aa).

The signal sequence occupies residues 1–25; it reads MASLFRSYLPAIWLLLSQLLRESLA. 3 disulfides stabilise this stretch: cysteine 31–cysteine 125, cysteine 43–cysteine 138, and cysteine 124–cysteine 129. The propeptide at 59–114 is c peptide; that stretch reads LESGRPKEMVSTSNNKDGQALGTTSEFIPNLSPELKKPLSEGQPSLKKIILSRKKR.

The protein belongs to the insulin family. In terms of tissue distribution, expressed in placenta, uterus and in fetal perichondrium. Expression levels were increased in both early placentas and molar pregnancies and were reduced in choriocarcinoma cells.

Its subcellular location is the secreted. May play an important role in trophoblast development and in the regulation of bone formation. In Homo sapiens (Human), this protein is Early placenta insulin-like peptide (INSL4).